A 178-amino-acid polypeptide reads, in one-letter code: ATP synthase subunit delta (178 aa).

The protein belongs to the ATPase delta chain family. In terms of assembly, F-type ATPases have 2 components, F(1) - the catalytic core - and F(0) - the membrane proton channel. F(1) has five subunits: alpha(3), beta(3), gamma(1), delta(1), epsilon(1). F(0) has three main subunits: a(1), b(2) and c(10-14). The alpha and beta chains form an alternating ring which encloses part of the gamma chain. F(1) is attached to F(0) by a central stalk formed by the gamma and epsilon chains, while a peripheral stalk is formed by the delta and b chains.

Its subcellular location is the cell membrane. In terms of biological role, f(1)F(0) ATP synthase produces ATP from ADP in the presence of a proton or sodium gradient. F-type ATPases consist of two structural domains, F(1) containing the extramembraneous catalytic core and F(0) containing the membrane proton channel, linked together by a central stalk and a peripheral stalk. During catalysis, ATP synthesis in the catalytic domain of F(1) is coupled via a rotary mechanism of the central stalk subunits to proton translocation. Its function is as follows. This protein is part of the stalk that links CF(0) to CF(1). It either transmits conformational changes from CF(0) to CF(1) or is implicated in proton conduction. In Streptococcus pneumoniae (strain CGSP14), this protein is ATP synthase subunit delta.